A 234-amino-acid polypeptide reads, in one-letter code: Leucyl/phenylalanyl-tRNA--protein transferase (234 aa).

The protein belongs to the L/F-transferase family.

The protein localises to the cytoplasm. The catalysed reaction is N-terminal L-lysyl-[protein] + L-leucyl-tRNA(Leu) = N-terminal L-leucyl-L-lysyl-[protein] + tRNA(Leu) + H(+). The enzyme catalyses N-terminal L-arginyl-[protein] + L-leucyl-tRNA(Leu) = N-terminal L-leucyl-L-arginyl-[protein] + tRNA(Leu) + H(+). It catalyses the reaction L-phenylalanyl-tRNA(Phe) + an N-terminal L-alpha-aminoacyl-[protein] = an N-terminal L-phenylalanyl-L-alpha-aminoacyl-[protein] + tRNA(Phe). Its function is as follows. Functions in the N-end rule pathway of protein degradation where it conjugates Leu, Phe and, less efficiently, Met from aminoacyl-tRNAs to the N-termini of proteins containing an N-terminal arginine or lysine. The protein is Leucyl/phenylalanyl-tRNA--protein transferase of Tolumonas auensis (strain DSM 9187 / NBRC 110442 / TA 4).